The following is a 368-amino-acid chain: Glutamate 5-kinase 1 (368 aa).

K12 lines the ATP pocket. Residues S52, D135, and N147 each coordinate substrate. Residues S167–D168 and T209–K215 contribute to the ATP site. The region spanning Q274 to K348 is the PUA domain.

It belongs to the glutamate 5-kinase family.

The protein localises to the cytoplasm. It carries out the reaction L-glutamate + ATP = L-glutamyl 5-phosphate + ADP. It functions in the pathway amino-acid biosynthesis; L-proline biosynthesis; L-glutamate 5-semialdehyde from L-glutamate: step 1/2. Catalyzes the transfer of a phosphate group to glutamate to form L-glutamate 5-phosphate. This chain is Glutamate 5-kinase 1, found in Pseudoalteromonas translucida (strain TAC 125).